We begin with the raw amino-acid sequence, 313 residues long: Probable cytochrome c oxidase subunit 2 (313 aa).

Residues 5–51 (RYWSKQSYKKLKVDQEHNTTEYTNVCNSTSLGSTYTLPLKMELWKIY) form the RPE1 insert domain. Transmembrane regions (helical) follow at residues 39 to 59 (YTLPLKMELWKIYITLIYFLI), 94 to 114 (LLYIGTAIVLFVAGLLGFVCI), and 131 to 151 (LLIEIIWTVIPIIILVIIAVP). Residues histidine 233, cysteine 268, cysteine 272, and histidine 276 each contribute to the Cu cation site.

It belongs to the cytochrome c oxidase subunit 2 family. It depends on Cu cation as a cofactor. Heme is required as a cofactor.

Its subcellular location is the cell membrane. The enzyme catalyses 4 Fe(II)-[cytochrome c] + O2 + 8 H(+)(in) = 4 Fe(III)-[cytochrome c] + 2 H2O + 4 H(+)(out). Subunits I and II form the functional core of the enzyme complex. Electrons originating in cytochrome c are transferred via heme a and Cu(A) to the binuclear center formed by heme a3 and Cu(B). This is Probable cytochrome c oxidase subunit 2 (ctaC) from Rickettsia prowazekii (strain Madrid E).